Reading from the N-terminus, the 614-residue chain is Dihydroxy-acid dehydratase (614 aa).

Asp-81 is a binding site for Mg(2+). [2Fe-2S] cluster is bound at residue Cys-122. Positions 123 and 124 each coordinate Mg(2+). Lys-124 is subject to N6-carboxylysine. Cys-193 lines the [2Fe-2S] cluster pocket. Glu-489 is a binding site for Mg(2+). Residue Ser-515 is the Proton acceptor of the active site.

Belongs to the IlvD/Edd family. As to quaternary structure, homodimer. The cofactor is [2Fe-2S] cluster. Mg(2+) serves as cofactor.

The enzyme catalyses (2R)-2,3-dihydroxy-3-methylbutanoate = 3-methyl-2-oxobutanoate + H2O. The catalysed reaction is (2R,3R)-2,3-dihydroxy-3-methylpentanoate = (S)-3-methyl-2-oxopentanoate + H2O. The protein operates within amino-acid biosynthesis; L-isoleucine biosynthesis; L-isoleucine from 2-oxobutanoate: step 3/4. It functions in the pathway amino-acid biosynthesis; L-valine biosynthesis; L-valine from pyruvate: step 3/4. In terms of biological role, functions in the biosynthesis of branched-chain amino acids. Catalyzes the dehydration of (2R,3R)-2,3-dihydroxy-3-methylpentanoate (2,3-dihydroxy-3-methylvalerate) into 2-oxo-3-methylpentanoate (2-oxo-3-methylvalerate) and of (2R)-2,3-dihydroxy-3-methylbutanoate (2,3-dihydroxyisovalerate) into 2-oxo-3-methylbutanoate (2-oxoisovalerate), the penultimate precursor to L-isoleucine and L-valine, respectively. The sequence is that of Dihydroxy-acid dehydratase from Cellvibrio japonicus (strain Ueda107) (Pseudomonas fluorescens subsp. cellulosa).